The sequence spans 232 residues: Small ribosomal subunit protein uS3 (232 aa).

The KH type-2 domain maps to 39–107; it reads VRQFLTKELA…PAQINIAEVR (69 aa).

This sequence belongs to the universal ribosomal protein uS3 family. Part of the 30S ribosomal subunit. Forms a tight complex with proteins S10 and S14.

Functionally, binds the lower part of the 30S subunit head. Binds mRNA in the 70S ribosome, positioning it for translation. The polypeptide is Small ribosomal subunit protein uS3 (Yersinia pseudotuberculosis serotype O:1b (strain IP 31758)).